Reading from the N-terminus, the 259-residue chain is MDHLQLAAHTFSSRLILGTGKFSSAAVMLEAVKASGAQLVTVALRRFNREQLEDDLFGPLSELPGITLMPNTSGASTAAEAIKAANISRELSGSPFIKVEIHPNPQHLMPDPIETMEAARVLASEGFLVMPYISPDPVLAKRLEEVGCASVMPLGSAIGSGQGLASAAMLSIIIRESSIPVIVDAGLRAPSEAARAMEMGCSAVLVNSAIAASDNPAEMAAAFRDSTDAGRRAFKAGLMRESREAVATSPLTSFLGEQS.

Lys-98 (schiff-base intermediate with DXP) is an active-site residue. 1-deoxy-D-xylulose 5-phosphate-binding positions include Gly-159, 185-186 (AG), and 207-208 (NS).

This sequence belongs to the ThiG family. As to quaternary structure, homotetramer. Forms heterodimers with either ThiH or ThiS.

It localises to the cytoplasm. It carries out the reaction [ThiS sulfur-carrier protein]-C-terminal-Gly-aminoethanethioate + 2-iminoacetate + 1-deoxy-D-xylulose 5-phosphate = [ThiS sulfur-carrier protein]-C-terminal Gly-Gly + 2-[(2R,5Z)-2-carboxy-4-methylthiazol-5(2H)-ylidene]ethyl phosphate + 2 H2O + H(+). It participates in cofactor biosynthesis; thiamine diphosphate biosynthesis. In terms of biological role, catalyzes the rearrangement of 1-deoxy-D-xylulose 5-phosphate (DXP) to produce the thiazole phosphate moiety of thiamine. Sulfur is provided by the thiocarboxylate moiety of the carrier protein ThiS. In vitro, sulfur can be provided by H(2)S. In Chlorobium phaeovibrioides (strain DSM 265 / 1930) (Prosthecochloris vibrioformis (strain DSM 265)), this protein is Thiazole synthase.